We begin with the raw amino-acid sequence, 332 residues long: 2-hydroxyacid dehydrogenase homolog 1 (332 aa).

NAD(+)-binding positions include 154 to 155 (RI), 233 to 235 (TSR), and aspartate 259. The active site involves arginine 235. Residue glutamate 264 is part of the active site. The Proton donor role is filled by histidine 296. Residue 296–299 (HQAF) coordinates NAD(+).

The protein belongs to the D-isomer specific 2-hydroxyacid dehydrogenase family.

Its subcellular location is the cytoplasm. The protein resides in the nucleus. The polypeptide is 2-hydroxyacid dehydrogenase homolog 1 (Schizosaccharomyces pombe (strain 972 / ATCC 24843) (Fission yeast)).